Here is a 613-residue protein sequence, read N- to C-terminus: Nuclear receptor subfamily 1 group D member 1 (613 aa).

Residues 1 to 48 (MTTLDSNNNTGGVITYIGSSGSSPNRTSPESLYSDSSNGSFQSLTQGC) show a composition bias toward polar residues. Residues 1–70 (MTTLDSNNNT…TQDPARSFGS (70 aa)) are required for phosphorylation by CSNK1E and cytoplasmic localization. The interval 1 to 102 (MTTLDSNNNT…SSFYNGSPPG (102 aa)) is disordered. The tract at residues 1 to 129 (MTTLDSNNNT…TSNITKLNGM (129 aa)) is modulating. Residues 49–285 (PTYFPPSPTG…PPRSPSPEPT (237 aa)) are crucial for activation of GJA1. A phosphoserine; by GSK3-beta mark is found at Ser55 and Ser59. The span at 69-102 (GSIPPSLGDDGSPSSSSSSSSSSSSSFYNGSPPG) shows a compositional bias: low complexity. A DNA-binding region (nuclear receptor) is located at residues 130–206 (VLLCKVCGDV…VGMSRDAVRF (77 aa)). 2 consecutive NR C4-type zinc fingers follow at residues 133–153 (CKVC…CEGC) and 170–194 (CLKN…FKKC). N6-acetyllysine; by KAT5 occurs at positions 192 and 193. Residues 233-286 (SSQCPLETPPTQHPTPGPMGPSPPPAPAPSPLVGFSQFPQQLTPPRSPSPEPTV) are disordered. Over residues 239–262 (ETPPTQHPTPGPMGPSPPPAPAPS) the composition is skewed to pro residues. Thr275 is modified (phosphothreonine; by CDK1). An NR LBD domain is found at 285 to 613 (TVEDVISQVA…KLLSFRVDAQ (329 aa)). Cys417 contributes to the heme binding site. An N6-acetyllysine modification is found at Lys590. His601 lines the heme pocket.

It belongs to the nuclear hormone receptor family. NR1 subfamily. As to quaternary structure, binds DNA as a monomer or a homodimer. Interacts with C1D, SP1 and ZNHIT1. Interacts with OPHN1 (via C-terminus). Interacts with PER2; the interaction associates PER2 to BMAL1 promoter region. Interacts with CRY1. Interacts with CCAR2. Interacts with NR2E3. Interacts with SIAH2. Interacts with FBXW7 and CDK1. Interacts with HUWE1. Interacts with NR0B2. Interacts with NFIL3. Interacts (via domain NR LBD) with HSP90AA1 and HSP90AB1. Ubiquitinated, leading to its proteasomal degradation. Ubiquitinated by the SCF(FBXW7) complex when phosphorylated by CDK1 leading to its proteasomal degradation. Ubiquitinated by SIAH2; leading to its proteasomal degradation. Rapidly ubiquitinated in response to inflammatory triggers and sumoylation is a prerequisite to its ubiquitination. In terms of processing, sumoylated by UBE2I, desumoylated by SENP1, and sumoylation is a prerequisite to its ubiquitination. Post-translationally, phosphorylated by CSNK1E; phosphorylation enhances its cytoplasmic localization. Undergoes lysosome-mediated degradation in a time-dependent manner in the liver. In terms of tissue distribution, expressed in all tissues and cell lines examined. Expressed at high levels in some squamous carcinoma cell lines.

The protein localises to the nucleus. It is found in the cytoplasm. The protein resides in the cell projection. Its subcellular location is the dendrite. It localises to the dendritic spine. Functionally, transcriptional repressor which coordinates circadian rhythm and metabolic pathways in a heme-dependent manner. Integral component of the complex transcription machinery that governs circadian rhythmicity and forms a critical negative limb of the circadian clock by directly repressing the expression of core clock components BMAL1, CLOCK and CRY1. Also regulates genes involved in metabolic functions, including lipid and bile acid metabolism, adipogenesis, gluconeogenesis and the macrophage inflammatory response. Acts as a receptor for heme which stimulates its interaction with the NCOR1/HDAC3 corepressor complex, enhancing transcriptional repression. Recognizes two classes of DNA response elements within the promoter of its target genes and can bind to DNA as either monomers or homodimers, depending on the nature of the response element. Binds as a monomer to a response element composed of the consensus half-site motif 5'-[A/G]GGTCA-3' preceded by an A/T-rich 5' sequence (RevRE), or as a homodimer to a direct repeat of the core motif spaced by two nucleotides (RevDR-2). Acts as a potent competitive repressor of ROR alpha (RORA) function and regulates the levels of its ligand heme by repressing the expression of PPARGC1A, a potent inducer of heme synthesis. Regulates lipid metabolism by repressing the expression of APOC3 and by influencing the activity of sterol response element binding proteins (SREBPs); represses INSIG2 which interferes with the proteolytic activation of SREBPs which in turn govern the rhythmic expression of enzymes with key functions in sterol and fatty acid synthesis. Regulates gluconeogenesis via repression of G6PC1 and PEPCK and adipocyte differentiation via repression of PPARG. Regulates glucagon release in pancreatic alpha-cells via the AMPK-NAMPT-SIRT1 pathway and the proliferation, glucose-induced insulin secretion and expression of key lipogenic genes in pancreatic-beta cells. Positively regulates bile acid synthesis by increasing hepatic expression of CYP7A1 via repression of NR0B2 and NFIL3 which are negative regulators of CYP7A1. Modulates skeletal muscle oxidative capacity by regulating mitochondrial biogenesis and autophagy; controls mitochondrial biogenesis and respiration by interfering with the STK11-PRKAA1/2-SIRT1-PPARGC1A signaling pathway. Represses the expression of SERPINE1/PAI1, an important modulator of cardiovascular disease and the expression of inflammatory cytokines and chemokines in macrophages. Represses gene expression at a distance in macrophages by inhibiting the transcription of enhancer-derived RNAs (eRNAs). Plays a role in the circadian regulation of body temperature and negatively regulates thermogenic transcriptional programs in brown adipose tissue (BAT); imposes a circadian oscillation in BAT activity, increasing body temperature when awake and depressing thermogenesis during sleep. In concert with NR2E3, regulates transcriptional networks critical for photoreceptor development and function. In addition to its activity as a repressor, can also act as a transcriptional activator. In the ovarian granulosa cells acts as a transcriptional activator of STAR which plays a role in steroid biosynthesis. In collaboration with SP1, activates GJA1 transcription in a heme-independent manner. Represses the transcription of CYP2B10, CYP4A10 and CYP4A14. Represses the transcription of CES2. Represses and regulates the circadian expression of TSHB in a NCOR1-dependent manner. Negatively regulates the protein stability of NR3C1 and influences the time-dependent subcellular distribution of NR3C1, thereby affecting its transcriptional regulatory activity. Plays a critical role in the circadian control of neutrophilic inflammation in the lung; under resting, non-stress conditions, acts as a rhythmic repressor to limit inflammatory activity whereas in the presence of inflammatory triggers undergoes ubiquitin-mediated degradation thereby relieving inhibition of the inflammatory response. Plays a key role in the circadian regulation of microglial activation and neuroinflammation; suppresses microglial activation through the NF-kappaB pathway in the central nervous system. Plays a role in the regulation of the diurnal rhythms of lipid and protein metabolism in the skeletal muscle via transcriptional repression of genes controlling lipid and amino acid metabolism in the muscle. This chain is Nuclear receptor subfamily 1 group D member 1 (NR1D1), found in Bos taurus (Bovine).